Reading from the N-terminus, the 283-residue chain is Pyridoxal kinase PdxY (283 aa).

Substrate is bound at residue serine 8. Positions 110 and 147 each coordinate ATP. A substrate-binding site is contributed by aspartate 219.

It belongs to the pyridoxine kinase family. PdxY subfamily. In terms of assembly, homodimer. Mg(2+) serves as cofactor.

It catalyses the reaction pyridoxal + ATP = pyridoxal 5'-phosphate + ADP + H(+). Its pathway is cofactor metabolism; pyridoxal 5'-phosphate salvage; pyridoxal 5'-phosphate from pyridoxal: step 1/1. Functionally, pyridoxal kinase involved in the salvage pathway of pyridoxal 5'-phosphate (PLP). Catalyzes the phosphorylation of pyridoxal to PLP. In Corynebacterium diphtheriae (strain ATCC 700971 / NCTC 13129 / Biotype gravis), this protein is Pyridoxal kinase PdxY.